A 147-amino-acid chain; its full sequence is MKLTTKSHYSVKALLDLALQPDYGPASVKAIAERQNIPGPYLEKLLITLRRAGIVNAYRGVRGGYQLAQAPDQISLGQILAALEESLEPFPQYGDDQSLAEDWVTLSVWRQLHQKFVKALYSITLADLYYDARSWQAAQGEGINFIV.

The 129-residue stretch at 2–130 (KLTTKSHYSV…YSITLADLYY (129 aa)) folds into the HTH rrf2-type domain.

The sequence is that of Putative HTH-type transcriptional regulator slr0846 from Synechocystis sp. (strain ATCC 27184 / PCC 6803 / Kazusa).